The following is a 341-amino-acid chain: Glyceraldehyde-3-phosphate dehydrogenase 2 (341 aa).

NAD(+) contacts are provided by residues 12 to 13, Arg78, and Thr120; that span reads RI. Residues 152 to 154 and Thr183 each bind D-glyceraldehyde 3-phosphate; that span reads SCT. Cys153 acts as the Nucleophile in catalysis. Asn184 is an NAD(+) binding site. D-glyceraldehyde 3-phosphate-binding positions include Arg198, 211–212, and Arg234; that span reads TG. Asn313 lines the NAD(+) pocket.

Belongs to the glyceraldehyde-3-phosphate dehydrogenase family. In terms of assembly, homotetramer.

The protein resides in the cytoplasm. The catalysed reaction is D-glyceraldehyde 3-phosphate + phosphate + NAD(+) = (2R)-3-phospho-glyceroyl phosphate + NADH + H(+). It participates in carbohydrate degradation; glycolysis; pyruvate from D-glyceraldehyde 3-phosphate: step 1/5. Its function is as follows. Catalyzes the oxidative phosphorylation of glyceraldehyde 3-phosphate (G3P) to 1,3-bisphosphoglycerate (BPG) using the cofactor NAD. The first reaction step involves the formation of a hemiacetal intermediate between G3P and a cysteine residue, and this hemiacetal intermediate is then oxidized to a thioester, with concomitant reduction of NAD to NADH. The reduced NADH is then exchanged with the second NAD, and the thioester is attacked by a nucleophilic inorganic phosphate to produce BPG. This is Glyceraldehyde-3-phosphate dehydrogenase 2 (gapA2) from Staphylococcus aureus (strain MRSA252).